A 151-amino-acid chain; its full sequence is MTLRLDSLKANKGARRRKLRKGRGIAAGQGASCGFGMRGQKSRSGRPTRPGFEGGQMPLYRRVPKLKHFPLVNPKHFTVLNVSALKDLKDGATVNLDSLVKDGIVTSPKHPLKMLGNGELTVKNLTVQASAFTTSARTKIEAAGGTCETLD.

Positions 1 to 57 are disordered; the sequence is MTLRLDSLKANKGARRRKLRKGRGIAAGQGASCGFGMRGQKSRSGRPTRPGFEGGQM. The span at 12–23 shows a compositional bias: basic residues; that stretch reads KGARRRKLRKGR. Over residues 25 to 37 the composition is skewed to gly residues; sequence IAAGQGASCGFGM.

Belongs to the universal ribosomal protein uL15 family. Part of the 50S ribosomal subunit.

Binds to the 23S rRNA. This Synechococcus sp. (strain CC9902) protein is Large ribosomal subunit protein uL15.